A 501-amino-acid polypeptide reads, in one-letter code: Glucose-6-phosphate exchanger SLC37A2 (501 aa).

Residues 19 to 39 (SWFRGFILLLTFLIYACYHMS) form a helical membrane-spanning segment. N-linked (GlcNAc...) asparagine glycosylation is found at Asn53, Asn62, and Asn68. 5 consecutive transmembrane segments (helical) span residues 88-108 (GAVD…SGIF), 118-140 (LSAG…FWNI), 142-164 (MLWY…WPSV), 179-199 (FIMG…SLIA), and 210-230 (SFIV…LFLI). The segment covering 240–252 (PPRHHDDPEKEQD) has biased composition (basic and acidic residues). The interval 240–266 (PPRHHDDPEKEQDNPEDPVNSPYSSRE) is disordered. The next 6 membrane-spanning stretches (helical) occupy residues 303–323 (CLLF…LYIF), 334–354 (GDLS…AGLI), 362–382 (ATTC…YNYI), 391–411 (IVML…ITTA), 434–454 (AIID…AGLI), and 462–482 (VFYM…RLVY).

This sequence belongs to the major facilitator superfamily. Organophosphate:Pi antiporter (OPA) (TC 2.A.1.4) family. As to expression, highly expressed in bone marrow derived macrophages, and weakly in spleen.

Its subcellular location is the endoplasmic reticulum membrane. The catalysed reaction is D-glucose 6-phosphate(in) + phosphate(out) = D-glucose 6-phosphate(out) + phosphate(in). Inhibited by vanadate but not by chlorogenic acid. Its function is as follows. Inorganic phosphate and glucose-6-phosphate antiporter. May transport cytoplasmic glucose-6-phosphate into the lumen of the endoplasmic reticulum and translocate inorganic phosphate into the opposite direction. Independent of a lumenal glucose-6-phosphatase. May not play a role in homeostatic regulation of blood glucose levels. In Mus musculus (Mouse), this protein is Glucose-6-phosphate exchanger SLC37A2.